A 371-amino-acid chain; its full sequence is Cyanide hydratase (371 aa).

The CN hydrolase domain maps to 6-285 (YKAAAVTSEP…DGLLYVDIDL (280 aa)). Glu-46 acts as the Proton acceptor in catalysis. Lys-128 is an active-site residue. The active-site Nucleophile is Cys-163. Residues 339–353 (GLNRPLDPPKDERHG) show a composition bias toward basic and acidic residues. Positions 339-371 (GLNRPLDPPKDERHGIVGVAGQKSAEQRKAGDL) are disordered.

Belongs to the carbon-nitrogen hydrolase superfamily. Nitrilase family. As to quaternary structure, oligomer of dimers, forming left-handed helical fibers.

It carries out the reaction formamide = hydrogen cyanide + H2O. Catalyzes the hydration of cyanide to formamide. Degradation of cyanide may be important for plant pathogenic fungi in infection of cyanogenic plants. Also acts on 2-cyanopyridine, fumaronitrile and benzonitrile, albeit at a lower rate. This chain is Cyanide hydratase (nit), found in Stereum hirsutum (strain FP-91666) (White-rot fungus).